Here is a 297-residue protein sequence, read N- to C-terminus: tRNA dimethylallyltransferase (297 aa).

ATP is bound at residue 15–22; it reads GPTASGKS. 17 to 22 contacts substrate; the sequence is TASGKS. Interaction with substrate tRNA stretches follow at residues 40–43 and 164–168; these read DSMQ and QRIVR.

It belongs to the IPP transferase family. As to quaternary structure, monomer. The cofactor is Mg(2+).

The enzyme catalyses adenosine(37) in tRNA + dimethylallyl diphosphate = N(6)-dimethylallyladenosine(37) in tRNA + diphosphate. Functionally, catalyzes the transfer of a dimethylallyl group onto the adenine at position 37 in tRNAs that read codons beginning with uridine, leading to the formation of N6-(dimethylallyl)adenosine (i(6)A). The polypeptide is tRNA dimethylallyltransferase (Rhizobium etli (strain CIAT 652)).